A 124-amino-acid polypeptide reads, in one-letter code: Small ribosomal subunit protein uS11 (124 aa).

This sequence belongs to the universal ribosomal protein uS11 family. Part of the 30S ribosomal subunit. Interacts with proteins S7 and S18. Binds to IF-3.

Located on the platform of the 30S subunit, it bridges several disparate RNA helices of the 16S rRNA. Forms part of the Shine-Dalgarno cleft in the 70S ribosome. The polypeptide is Small ribosomal subunit protein uS11 (Anaplasma phagocytophilum (strain HZ)).